A 174-amino-acid chain; its full sequence is Acetolactate synthase small subunit (174 aa).

Residues 4-78 (TLSVLVQDEA…NILNVQDVTN (75 aa)) enclose the ACT domain.

It belongs to the acetolactate synthase small subunit family. In terms of assembly, dimer of large and small chains.

Its subcellular location is the plastid. It localises to the chloroplast. It catalyses the reaction 2 pyruvate + H(+) = (2S)-2-acetolactate + CO2. It functions in the pathway amino-acid biosynthesis; L-isoleucine biosynthesis; L-isoleucine from 2-oxobutanoate: step 1/4. Its pathway is amino-acid biosynthesis; L-valine biosynthesis; L-valine from pyruvate: step 1/4. The polypeptide is Acetolactate synthase small subunit (ilvH) (Porphyra purpurea (Red seaweed)).